The primary structure comprises 404 residues: Glucose-1-phosphate adenylyltransferase (404 aa).

Alpha-D-glucose 1-phosphate-binding positions include Tyr-99, Gly-164, 179 to 180 (EK), and Ser-197.

The protein belongs to the bacterial/plant glucose-1-phosphate adenylyltransferase family.

It catalyses the reaction alpha-D-glucose 1-phosphate + ATP + H(+) = ADP-alpha-D-glucose + diphosphate. The protein operates within glycan biosynthesis; glycogen biosynthesis. Involved in the biosynthesis of ADP-glucose, a building block, required in the biosynthesis of maltose-1-phosphate (M1P) and in the elongation reactions to produce linear alpha-1,4-glucans. Catalyzes the reaction between ATP and alpha-D-glucose 1-phosphate (G1P) to produce pyrophosphate and ADP-Glc. This is Glucose-1-phosphate adenylyltransferase from Mycolicibacterium gilvum (strain PYR-GCK) (Mycobacterium gilvum (strain PYR-GCK)).